The primary structure comprises 411 residues: Serine hydroxymethyltransferase (411 aa).

Residue 120–122 (GHL) coordinates (6S)-5,6,7,8-tetrahydrofolate. N6-(pyridoxal phosphate)lysine is present on Lys-225. Residue 350-352 (SPF) coordinates (6S)-5,6,7,8-tetrahydrofolate.

The protein belongs to the SHMT family. Homodimer. Pyridoxal 5'-phosphate is required as a cofactor.

It localises to the cytoplasm. The catalysed reaction is (6R)-5,10-methylene-5,6,7,8-tetrahydrofolate + glycine + H2O = (6S)-5,6,7,8-tetrahydrofolate + L-serine. The protein operates within one-carbon metabolism; tetrahydrofolate interconversion. It functions in the pathway amino-acid biosynthesis; glycine biosynthesis; glycine from L-serine: step 1/1. Catalyzes the reversible interconversion of serine and glycine with tetrahydrofolate (THF) serving as the one-carbon carrier. This reaction serves as the major source of one-carbon groups required for the biosynthesis of purines, thymidylate, methionine, and other important biomolecules. Also exhibits THF-independent aldolase activity toward beta-hydroxyamino acids, producing glycine and aldehydes, via a retro-aldol mechanism. The sequence is that of Serine hydroxymethyltransferase from Lactobacillus gasseri (strain ATCC 33323 / DSM 20243 / BCRC 14619 / CIP 102991 / JCM 1131 / KCTC 3163 / NCIMB 11718 / NCTC 13722 / AM63).